The following is a 335-amino-acid chain: Photosystem II assembly lipoprotein Ycf48 (335 aa).

An N-terminal signal peptide occupies residues 1-23 (MSRLFSNLFNLLLIAAIGFGLSG). Residue Cys24 is the site of N-palmitoyl cysteine attachment. A lipid anchor (S-diacylglycerol cysteine) is attached at Cys24.

Belongs to the Ycf48 family. As to quaternary structure, part of early PSII assembly complexes which includes D1 (psbA) and PsbI; not found in mature PSII. Binds to the lumenal side of PSII complexes. Interacts with YidC.

The protein resides in the cellular thylakoid membrane. A factor required for optimal assembly of photosystem II (PSII), acting in the early stages of PSII assembly. Also plays a role in replacement of photodamaged D1 (psbA). Assists YidC in synthesis of chlorophyll-binding proteins. The protein is Photosystem II assembly lipoprotein Ycf48 of Prochlorococcus marinus (strain MIT 9313).